A 552-amino-acid chain; its full sequence is Cation/acetate symporter ActP (552 aa).

The next 14 membrane-spanning stretches (helical) occupy residues 6–26 (LLAVLALLLSGPVVAADAIAG), 35–55 (MEAIVMFLIFVAMTLGITYWA), 78–98 (GLAMAGDFMSAASFLGISALV), 103–123 (FDGLIYSLGFLVGWPIILFLI), 151–171 (LSACGSLVVVALYLIAQMVGA), 185–205 (VAVVLVGILMVMYVLFGGMLA), 208–228 (WVQIIKAVLLLFGASFMAIMV), 264–284 (ISALSLGLGLMFGTAGLPHIL), 305–325 (GLMGYFYFLTFIIGFGAILLV), 357–377 (LFLGFISAVAFATILAVVAGL), 407–427 (VSKITVVALGVVAILLGILFE), 431–451 (IAFMVGLAFSIAASCNFPIIL), 467–487 (GGWLGLLTAVILMILGPTIWV), and 496–516 (IFPYEYPALFSMLVAFIGTWL).

This sequence belongs to the sodium:solute symporter (SSF) (TC 2.A.21) family.

It localises to the cell inner membrane. Functionally, transports acetate. This is Cation/acetate symporter ActP from Erwinia tasmaniensis (strain DSM 17950 / CFBP 7177 / CIP 109463 / NCPPB 4357 / Et1/99).